Reading from the N-terminus, the 2542-residue chain is Unconventional myosin-IXa (2542 aa).

Residues 14–112 (NEHTLRIYPG…YRFLLREKNL (99 aa)) form the Ras-associating domain. One can recognise a Myosin motor domain in the interval 146-1017 (KDFDDLCSLP…ERQHLQDLLH (872 aa)). Residues 175–195 (IYTYVGSILIAINPFKFLPIY) traverse the membrane as a helical segment. 239-246 (GESGSGKT) serves as a coordination point for ATP. Residue Ser-755 is modified to Phosphoserine. Positions 908–919 (QAEPYFVKCIRS) are actin-binding. IQ domains are found at residues 1021 to 1041 (LRRIVLLQRWFRVLLSRQQFL), 1043 to 1072 (LRQASIIIQRFWRNYLNQKQVRNAAVEKDA), 1075 to 1104 (MASAASLLQASWRAHLERQRYLELRAAAVI), 1116 to 1145 (RHKAATCIQSRWRGYRQRKKYKEQRNKIIL), and 1139 to 1168 (QRNKIILLQSIYRGFRARQRCNALKEEKLR). The interval 1022–1163 (RRIVLLQRWF…RARQRCNALK (142 aa)) is neck or regulatory domain. The tail stretch occupies residues 1164–2505 (EEKLREAKLE…LKNVKNSPQK (1342 aa)). Over residues 1221–1240 (RESSMDFSKESPDKQQERGR) the composition is skewed to basic and acidic residues. Residues 1221 to 1276 (RESSMDFSKESPDKQQERGRRQSGTDLQEDVIVRQRPKSLEDLHQKKVGRAKRESR) form a disordered region. Phosphoserine is present on Ser-1243. Residue Thr-1245 is modified to Phosphothreonine. Residue Ser-1259 is modified to Phosphoserine. A coiled-coil region spans residues 1265-1292 (QKKVGRAKRESRRMRELEQAIFSLELLK). Over residues 1266–1276 (KKVGRAKRESR) the composition is skewed to basic residues. Residues Ser-1300 and Ser-1318 each carry the phosphoserine modification. Positions 1342–1401 (KSKPESLILDEGELKISSPNTFTNPKSQDNALSASSETSSTLAGKGASSDSEHLKNGTAK) are disordered. Residues 1358-1371 (SSPNTFTNPKSQDN) are compositionally biased toward polar residues. Positions 1372 to 1384 (ALSASSETSSTLA) are enriched in low complexity. The segment covering 1391-1401 (DSEHLKNGTAK) has biased composition (basic and acidic residues). A coiled-coil region spans residues 1492 to 1539 (TVLKKLEKLNIEKEKRQKQLQQQNEKEMMEQIRQQTDILEKERKAFKT). 4 disordered regions span residues 1650–1675 (RSTERDHFKSTHFYSHRSDDPSREGS), 1693–1727 (SGNPQAHKQDESAWKPKLAGPGQQETSQRFSSVDE), 1767–1793 (GKQGEKKTTRVKPASQSEISSFFPGPD), and 1806–1841 (QYHPTPPLSPELPGSCRKEFKENKEPSPKAKRKRGV). Residues 1665 to 1675 (HRSDDPSREGS) show a composition bias toward basic and acidic residues. The span at 1715–1726 (QQETSQRFSSVD) shows a compositional bias: polar residues. Residues 1821–1833 (CRKEFKENKEPSP) show a composition bias toward basic and acidic residues. Residue Ser-1950 is modified to Phosphoserine. Phorbol-ester/DAG-type zinc fingers lie at residues 2001 to 2050 (GHIF…TAKC) and 2068 to 2119 (SRLT…DTDA). The Rho-GAP domain maps to 2065–2253 (VELSRLTSED…LIVVEQMNKY (189 aa)). Residues Ser-2293 and Ser-2296 each carry the phosphoserine modification. Residues 2324 to 2360 (TDQQQAAMQQEEKVLTEQIENLQKEKEELTFEMLVLE) are a coiled coil. Residues 2361-2443 (PRASDDETLE…NTTSSHGTRK (83 aa)) form a disordered region. The span at 2377-2386 (TADSSENLNM) shows a compositional bias: polar residues. The segment covering 2420-2438 (SLDSVSSSVSSCLSNTTSS) has biased composition (low complexity). Ser-2458 carries the post-translational modification Phosphoserine. Residues 2465–2530 (TEGPLGQAKS…TVDSDCSSTQ (66 aa)) form a disordered region.

Belongs to the TRAFAC class myosin-kinesin ATPase superfamily. Myosin family. Post-translationally, phosphorylated by ALPK1 following monosodium urate monohydrate (MSU)-induced inflammation. Expressed in the eye, lung, liver, brain, heart, kidney, skeletal muscle and spleen. No detection was found in liver. In the brain, expressed in the ependymal cells of the third ventricle and the aqueduct.

The protein resides in the membrane. The protein localises to the cytoplasm. It localises to the synapse. It is found in the cell projection. Its subcellular location is the growth cone. In terms of biological role, myosins are actin-based motor molecules with ATPase activity. Unconventional myosins serve in intracellular movements. Regulates Rho by stimulating it's GTPase activity in neurons. Required for the regulation of neurite branching and motor neuron axon guidance. The chain is Unconventional myosin-IXa (Myo9a) from Mus musculus (Mouse).